The following is a 270-amino-acid chain: Type II restriction enzyme CeqI (270 aa).

It catalyses the reaction Endonucleolytic cleavage of DNA to give specific double-stranded fragments with terminal 5'-phosphates.. Functionally, a P subtype restriction enzyme that recognizes the double-stranded sequence 5'-GATATC-3' and cleaves after T-3. In Rhodococcus hoagii (Corynebacterium equii), this protein is Type II restriction enzyme CeqI (ceqIR).